The primary structure comprises 184 residues: ATP synthase subunit b, chloroplastic (184 aa).

Residues 27–49 (LATNPINLSVVLGVLIFFGKGVL) traverse the membrane as a helical segment.

Belongs to the ATPase B chain family. In terms of assembly, F-type ATPases have 2 components, F(1) - the catalytic core - and F(0) - the membrane proton channel. F(1) has five subunits: alpha(3), beta(3), gamma(1), delta(1), epsilon(1). F(0) has four main subunits: a(1), b(1), b'(1) and c(10-14). The alpha and beta chains form an alternating ring which encloses part of the gamma chain. F(1) is attached to F(0) by a central stalk formed by the gamma and epsilon chains, while a peripheral stalk is formed by the delta, b and b' chains.

It is found in the plastid. The protein localises to the chloroplast thylakoid membrane. Functionally, f(1)F(0) ATP synthase produces ATP from ADP in the presence of a proton or sodium gradient. F-type ATPases consist of two structural domains, F(1) containing the extramembraneous catalytic core and F(0) containing the membrane proton channel, linked together by a central stalk and a peripheral stalk. During catalysis, ATP synthesis in the catalytic domain of F(1) is coupled via a rotary mechanism of the central stalk subunits to proton translocation. Its function is as follows. Component of the F(0) channel, it forms part of the peripheral stalk, linking F(1) to F(0). The polypeptide is ATP synthase subunit b, chloroplastic (Eucalyptus globulus subsp. globulus (Tasmanian blue gum)).